The primary structure comprises 435 residues: Gamma-glutamyl phosphate reductase (435 aa).

It belongs to the gamma-glutamyl phosphate reductase family.

Its subcellular location is the cytoplasm. The catalysed reaction is L-glutamate 5-semialdehyde + phosphate + NADP(+) = L-glutamyl 5-phosphate + NADPH + H(+). It functions in the pathway amino-acid biosynthesis; L-proline biosynthesis; L-glutamate 5-semialdehyde from L-glutamate: step 2/2. Catalyzes the NADPH-dependent reduction of L-glutamate 5-phosphate into L-glutamate 5-semialdehyde and phosphate. The product spontaneously undergoes cyclization to form 1-pyrroline-5-carboxylate. The chain is Gamma-glutamyl phosphate reductase from Xylella fastidiosa (strain M12).